Consider the following 177-residue polypeptide: Protein ParB (177 aa).

The first 26 residues, 1–26 (MKRRSYAMLRAAAALAVLVVASPAWA), serve as a signal peptide directing secretion. A TNase-like domain is found at 27–157 (ELRGEVVRII…RGKRVGLWSD (131 aa)). Residues arginine 53, glutamate 61, and arginine 95 contribute to the active site.

Monomer. Ca(2+) is required as a cofactor. The N-terminus is blocked.

It is found in the secreted. With respect to regulation, endonuclease activity is inhibited by EDTA. In terms of biological role, involved in plasmid partition. An endonuclease that acts on supercoiled dsDNA, converting it first to open circular DNA and then linearizing it. Preferentially cleaves regions in dsDNA that are capable of forming ssDNA, such as AT-rich regions and sequences that can form cruciforms. Has poor endonucleolytic activity on linear DNA, has 5'-3' exonuclease activity on dsDNA cleaving generating 3'-phosphonucleotides. The protein is Protein ParB of Escherichia coli.